The primary structure comprises 782 residues: Polyribonucleotide nucleotidyltransferase (782 aa).

Residues Asp514 and Asp520 each contribute to the Mg(2+) site. The KH domain maps to 580 to 639 (PRIITIKIPVDQIGAVIGPKGKIINQIQDDTGAEITIEDDGTIYIGATEGTAAEAARAAI). The region spanning 651-723 (GERYLGTVVK…ARGKLSLVPV (73 aa)) is the S1 motif domain. Residues 734–753 (AGAGESAASGGAPRSAGGPQ) show a composition bias toward low complexity. The interval 734–782 (AGAGESAASGGAPRSAGGPQPREHQGPGRPRGRGGDHGGEGRQRTRRRH) is disordered. Basic and acidic residues predominate over residues 766–776 (RGGDHGGEGRQ).

This sequence belongs to the polyribonucleotide nucleotidyltransferase family. Requires Mg(2+) as cofactor.

The protein resides in the cytoplasm. It catalyses the reaction RNA(n+1) + phosphate = RNA(n) + a ribonucleoside 5'-diphosphate. Its function is as follows. Involved in mRNA degradation. Catalyzes the phosphorolysis of single-stranded polyribonucleotides processively in the 3'- to 5'-direction. The protein is Polyribonucleotide nucleotidyltransferase of Acidothermus cellulolyticus (strain ATCC 43068 / DSM 8971 / 11B).